A 185-amino-acid chain; its full sequence is Large ribosomal subunit protein uL22 (185 aa).

Belongs to the universal ribosomal protein uL22 family.

The protein is Large ribosomal subunit protein uL22 (RPL17) of Debaryomyces hansenii (strain ATCC 36239 / CBS 767 / BCRC 21394 / JCM 1990 / NBRC 0083 / IGC 2968) (Yeast).